The following is a 205-amino-acid chain: Inactive ribonuclease-like protein 9 (205 aa).

The signal sequence occupies residues 1–26 (MMRTLITTHPLPLLLLPQQLLQLVQF). 2 cysteine pairs are disulfide-bonded: C116/C168 and C123/C130. Residues N131 and N143 are each glycosylated (N-linked (GlcNAc...) asparagine).

It belongs to the pancreatic ribonuclease family. As to expression, at the mRNA level, widely expressed. At protein level, restricted to epididymis. Expressed in spermatozoa (sperm head and neck), with higher levels on ejaculated and epididymal sperm than on testicular sperm (at protein level). Expressed in the epithelial cells of the epididymal tubule (at protein level). Not detected in muscle.

It localises to the secreted. Does not exhibit any ribonuclease activity. This is Inactive ribonuclease-like protein 9 (RNASE9) from Homo sapiens (Human).